Here is a 497-residue protein sequence, read N- to C-terminus: uncharacterized protein (497 aa).

Residues 474 to 497 (DPRNPFSNGKPSGWSDEDVAWLKR) are disordered. The segment covering 488 to 497 (SDEDVAWLKR) has biased composition (acidic residues).

This is an uncharacterized protein from Bacillus anthracis.